The sequence spans 419 residues: Ribosomal RNA large subunit methyltransferase G (419 aa).

Residues 386–408 show a composition bias toward basic and acidic residues; it reads KAEPFETHPTEAEAKVEVTESKP. Residues 386 to 419 form a disordered region; it reads KAEPFETHPTEAEAKVEVTESKPHPQSSLYGTKK. Positions 409-419 are enriched in polar residues; it reads HPQSSLYGTKK.

Belongs to the methyltransferase superfamily. RlmG family.

Its subcellular location is the cytoplasm. It catalyses the reaction guanosine(1835) in 23S rRNA + S-adenosyl-L-methionine = N(2)-methylguanosine(1835) in 23S rRNA + S-adenosyl-L-homocysteine + H(+). Specifically methylates the guanine in position 1835 (m2G1835) of 23S rRNA. The polypeptide is Ribosomal RNA large subunit methyltransferase G (Shewanella woodyi (strain ATCC 51908 / MS32)).